The sequence spans 146 residues: Lysozyme-like protein 4 (146 aa).

The N-terminal stretch at 1-19 is a signal peptide; sequence MKASVVLSLLGYLVVPSGA. A C-type lysozyme domain is found at 20-146; that stretch reads YILGRCTVAK…LARWLDGCKL (127 aa). 4 disulfides stabilise this stretch: Cys25-Cys144, Cys49-Cys131, Cys84-Cys96, and Cys92-Cys110. Glu54 is a catalytic residue.

It belongs to the glycosyl hydrolase 22 family. In terms of assembly, monomer. As to expression, expressed in testis and epididymis.

Its subcellular location is the secreted. The protein resides in the cytoplasmic vesicle. It localises to the secretory vesicle. The protein localises to the acrosome. It is found in the cell projection. Its subcellular location is the cilium. The protein resides in the flagellum. Functionally, may be involved in fertilization. Has no detectable bacteriolytic and lysozyme activities in vitro. This chain is Lysozyme-like protein 4 (LYZL4), found in Homo sapiens (Human).